The primary structure comprises 209 residues: Large ribosomal subunit protein bL25 (209 aa).

The protein belongs to the bacterial ribosomal protein bL25 family. CTC subfamily. Part of the 50S ribosomal subunit; part of the 5S rRNA/L5/L18/L25 subcomplex. Contacts the 5S rRNA. Binds to the 5S rRNA independently of L5 and L18.

In terms of biological role, this is one of the proteins that binds to the 5S RNA in the ribosome where it forms part of the central protuberance. This is Large ribosomal subunit protein bL25 from Xanthomonas campestris pv. campestris (strain 8004).